Consider the following 642-residue polypeptide: Threonine--tRNA ligase (642 aa).

The TGS domain occupies 1 to 61 (MPVIRFYDGS…REDAFIEFVD (61 aa)). The segment at 243–534 (DHRKIGKFLQ…LIEECSGNLP (292 aa)) is catalytic. Zn(2+) contacts are provided by Cys-334, His-385, and His-511.

The protein belongs to the class-II aminoacyl-tRNA synthetase family. In terms of assembly, homodimer. Requires Zn(2+) as cofactor.

The protein resides in the cytoplasm. It catalyses the reaction tRNA(Thr) + L-threonine + ATP = L-threonyl-tRNA(Thr) + AMP + diphosphate + H(+). In terms of biological role, catalyzes the attachment of threonine to tRNA(Thr) in a two-step reaction: L-threonine is first activated by ATP to form Thr-AMP and then transferred to the acceptor end of tRNA(Thr). Also edits incorrectly charged L-seryl-tRNA(Thr). This is Threonine--tRNA ligase from Buchnera aphidicola subsp. Acyrthosiphon pisum (strain 5A).